The following is a 2080-amino-acid chain: Dysferlin (2080 aa).

The C2 1 domain occupies 1–101 (MLRVFILYAE…LATPSLSASF (101 aa)). Residues 1 to 2046 (MLRVFILYAE…FILWRRFRWA (2046 aa)) lie on the Cytoplasmic side of the membrane. Positions 18, 19, 21, and 40 each coordinate Ca(2+). Positions 132-144 (LFPPPTPLEPSPT) are enriched in pro residues. The interval 132–215 (LFPPPTPLEP…APTSRKLLSD (84 aa)) is disordered. The segment covering 155 to 172 (GGEEDTEDQGLTGDEAEP) has biased composition (acidic residues). T166 carries the post-translational modification Phosphothreonine. A phosphoserine mark is found at T166 and G167. Phosphothreonine is present on residues Y197 and P198. 6 consecutive C2 domains span residues 203–321 (KRSA…RKWL), 360–496 (DKED…EEEP), 1136–1262 (GVNR…PLTR), 1310–1438 (PPPQ…AESP), 1561–1679 (PMPP…ARCG), and 1795–1943 (GRPG…KKCS). Ca(2+)-binding residues include D1168, D1174, D1230, and D1232. Residues D1594, D1600, D1649, D1651, D1914, S1917, and D1920 each contribute to the Ca(2+) site. The disordered stretch occupies residues 1995–2017 (SEHEERPAGQGRDEPNMNPKLED). A helical membrane pass occupies residues 2047–2067 (IILFIILFILLLFLAIFIYAF). Residues 2068–2080 (PNYAAMKLVKPFS) lie on the Extracellular side of the membrane.

It belongs to the ferlin family. As to quaternary structure, interacts with CACNA1S. Interacts with ANXA1; the interaction is Ca(2+)- and injury state-dependent. Interacts with ANXA2; the interaction is Ca(2+)- and injury state-dependent. Interacts with CACNA1S and PARVB. Interacts with TRIM72/MG53; interaction is required for transport to sites of cell injury during repair patch formation. Interacts with RIPOR2; this interaction occurs during early myogenic differentiation. Interacts with CAV3 and PARVB. Interacts with AHNAK; the interaction is direct and Ca(2+)-independent. Interacts with AHNAK2; the interaction is direct and Ca(2+)-independent. It depends on Ca(2+) as a cofactor. In terms of tissue distribution, expressed in skeletal muscle, myoblast, myotube and in the syncytiotrophoblast (STB) of the placenta (at protein level). Ubiquitous. Highly expressed in skeletal muscle. Also found in heart, brain, spleen, intestine, placenta and at lower levels in liver, lung, kidney and pancreas.

It is found in the cell membrane. The protein resides in the sarcolemma. The protein localises to the cytoplasmic vesicle membrane. Its function is as follows. Key calcium ion sensor involved in the Ca(2+)-triggered synaptic vesicle-plasma membrane fusion. Plays a role in the sarcolemma repair mechanism of both skeletal muscle and cardiomyocytes that permits rapid resealing of membranes disrupted by mechanical stress. This Homo sapiens (Human) protein is Dysferlin (DYSF).